We begin with the raw amino-acid sequence, 348 residues long: MENSEQLVWLHGEPQATGSLKSAAEDFVVVEDLGFQPDGDGEQVLVRVRKRGCNTQFVAEMLAKFARLPLRAVSYAGLKDRHAVTEQWFCLHMPGKDTPDFSTLALEGCDVLEVTRHRRKLRIGTLRGNHFTLVLRQVSDRREVDARLVLIAANGVPNYFGSQRFGRNGNNLEQARLWANNEIRVKERNKRSFYLSASRSAMFNQVVSARLAGEQAKTVLCGDALQLTGRGSWFVAKPDELETLQARLDAGELQITAPLPGDGELGTQDDARAFEELALTGQETLWSLVKRERVESARRAVLLYPQQMCWEWQDDTAVEVKFWLPAGSFATSVVRELLQSFQDADIGV.

Phe27 provides a ligand contact to substrate. Catalysis depends on Asp80, which acts as the Nucleophile. Asn129 contributes to the substrate binding site. The TRUD domain occupies 155–303; it reads GVPNYFGSQR…VESARRAVLL (149 aa). Phe329 contributes to the substrate binding site.

It belongs to the pseudouridine synthase TruD family.

The enzyme catalyses uridine(13) in tRNA = pseudouridine(13) in tRNA. Its function is as follows. Responsible for synthesis of pseudouridine from uracil-13 in transfer RNAs. In Pectobacterium carotovorum subsp. carotovorum (strain PC1), this protein is tRNA pseudouridine synthase D.